The sequence spans 147 residues: Molybdopterin synthase catalytic subunit 1 (147 aa).

Substrate-binding positions include 43–45 (NVR), 109–110 (HR), K125, and 132–134 (KKE).

This sequence belongs to the MoaE family. In terms of assembly, heterotetramer of 2 MoaD subunits and 2 MoaE subunits. Also stable as homodimer. The enzyme changes between these two forms during catalysis.

It carries out the reaction 2 [molybdopterin-synthase sulfur-carrier protein]-C-terminal-Gly-aminoethanethioate + cyclic pyranopterin phosphate + H2O = molybdopterin + 2 [molybdopterin-synthase sulfur-carrier protein]-C-terminal Gly-Gly + 2 H(+). The protein operates within cofactor biosynthesis; molybdopterin biosynthesis. Its function is as follows. Converts molybdopterin precursor Z into molybdopterin. This requires the incorporation of two sulfur atoms into precursor Z to generate a dithiolene group. The sulfur is provided by MoaD. The polypeptide is Molybdopterin synthase catalytic subunit 1 (moaE1) (Mycobacterium tuberculosis (strain ATCC 25618 / H37Rv)).